Reading from the N-terminus, the 437-residue chain is ATP-dependent protease ATPase subunit HslU (437 aa).

Residues Val18, 60–65 (GCGKTE), Asp250, Glu315, and Arg387 contribute to the ATP site.

This sequence belongs to the ClpX chaperone family. HslU subfamily. In terms of assembly, a double ring-shaped homohexamer of HslV is capped on each side by a ring-shaped HslU homohexamer. The assembly of the HslU/HslV complex is dependent on binding of ATP.

The protein localises to the cytoplasm. Its function is as follows. ATPase subunit of a proteasome-like degradation complex; this subunit has chaperone activity. The binding of ATP and its subsequent hydrolysis by HslU are essential for unfolding of protein substrates subsequently hydrolyzed by HslV. HslU recognizes the N-terminal part of its protein substrates and unfolds these before they are guided to HslV for hydrolysis. In Methylobacterium radiotolerans (strain ATCC 27329 / DSM 1819 / JCM 2831 / NBRC 15690 / NCIMB 10815 / 0-1), this protein is ATP-dependent protease ATPase subunit HslU.